We begin with the raw amino-acid sequence, 169 residues long: uncharacterized protein (169 aa).

It localises to the mitochondrion. This is an uncharacterized protein from Paramecium tetraurelia.